Here is a 395-residue protein sequence, read N- to C-terminus: Phosphopentomutase (395 aa).

Residues D14, D286, H291, D327, H328, and H339 each contribute to the Mn(2+) site.

Belongs to the phosphopentomutase family. The cofactor is Mn(2+).

The protein localises to the cytoplasm. It catalyses the reaction 2-deoxy-alpha-D-ribose 1-phosphate = 2-deoxy-D-ribose 5-phosphate. The catalysed reaction is alpha-D-ribose 1-phosphate = D-ribose 5-phosphate. It participates in carbohydrate degradation; 2-deoxy-D-ribose 1-phosphate degradation; D-glyceraldehyde 3-phosphate and acetaldehyde from 2-deoxy-alpha-D-ribose 1-phosphate: step 1/2. Functionally, isomerase that catalyzes the conversion of deoxy-ribose 1-phosphate (dRib-1-P) and ribose 1-phosphate (Rib-1-P) to deoxy-ribose 5-phosphate (dRib-5-P) and ribose 5-phosphate (Rib-5-P), respectively. This chain is Phosphopentomutase, found in Staphylococcus haemolyticus (strain JCSC1435).